The chain runs to 246 residues: Small ribosomal subunit protein uS2 (246 aa).

The interval 224–246 (AKQGEESAETEAKEAETTETTTA) is disordered. Basic and acidic residues predominate over residues 225–239 (KQGEESAETEAKEAE).

This sequence belongs to the universal ribosomal protein uS2 family.

The chain is Small ribosomal subunit protein uS2 from Bacillus licheniformis (strain ATCC 14580 / DSM 13 / JCM 2505 / CCUG 7422 / NBRC 12200 / NCIMB 9375 / NCTC 10341 / NRRL NRS-1264 / Gibson 46).